An 878-amino-acid chain; its full sequence is Leucine--tRNA ligase (878 aa).

The short motif at 56-66 is the 'HIGH' region element; sequence PYPSGKLHMGH. Positions 630-634 match the 'KMSKS' region motif; it reads KMSKS. Position 633 (lysine 633) interacts with ATP.

It belongs to the class-I aminoacyl-tRNA synthetase family.

Its subcellular location is the cytoplasm. The enzyme catalyses tRNA(Leu) + L-leucine + ATP = L-leucyl-tRNA(Leu) + AMP + diphosphate. This chain is Leucine--tRNA ligase, found in Prochlorococcus marinus (strain MIT 9313).